We begin with the raw amino-acid sequence, 146 residues long: Large ribosomal subunit protein uL15 (146 aa).

Residues methionine 1 to glycine 54 form a disordered region. A compositionally biased stretch (gly residues) spans arginine 23–isoleucine 37.

Belongs to the universal ribosomal protein uL15 family. In terms of assembly, part of the 50S ribosomal subunit.

In terms of biological role, binds to the 23S rRNA. In Acinetobacter baumannii (strain SDF), this protein is Large ribosomal subunit protein uL15.